Here is a 271-residue protein sequence, read N- to C-terminus: 5'-AMP-activated protein kinase subunit beta-2 (271 aa).

The disordered stretch occupies residues 1–46; that stretch reads MGNTTSERVSGERHGAKAARAEGGGHGPGKEHKIMVGSTDDPSVFS. Position 38 is a phosphoserine; by ULK1 (Ser-38). A Phosphothreonine; by ULK1 modification is found at Thr-39. Ser-68 carries the post-translational modification Phosphoserine; by ULK1. Ser-94 and Ser-107 each carry phosphoserine. Position 147 is a phosphothreonine (Thr-147). Ser-157, Ser-169, Ser-173, and Ser-183 each carry phosphoserine.

It belongs to the 5'-AMP-activated protein kinase beta subunit family. In terms of assembly, AMPK is a heterotrimer of an alpha catalytic subunit (PRKAA1 or PRKAA2), a beta (PRKAB1 or PRKAB2) and a gamma non-catalytic subunits (PRKAG1, PRKAG2 or PRKAG3). In terms of processing, phosphorylated when associated with the catalytic subunit (PRKAA1 or PRKAA2). Phosphorylated by ULK1 and ULK2; leading to negatively regulate AMPK activity and suggesting the existence of a regulatory feedback loop between ULK1, ULK2 and AMPK.

Non-catalytic subunit of AMP-activated protein kinase (AMPK), an energy sensor protein kinase that plays a key role in regulating cellular energy metabolism. In response to reduction of intracellular ATP levels, AMPK activates energy-producing pathways and inhibits energy-consuming processes: inhibits protein, carbohydrate and lipid biosynthesis, as well as cell growth and proliferation. AMPK acts via direct phosphorylation of metabolic enzymes, and by longer-term effects via phosphorylation of transcription regulators. Also acts as a regulator of cellular polarity by remodeling the actin cytoskeleton; probably by indirectly activating myosin. Beta non-catalytic subunit acts as a scaffold on which the AMPK complex assembles, via its C-terminus that bridges alpha (PRKAA1 or PRKAA2) and gamma subunits (PRKAG1, PRKAG2 or PRKAG3). This is 5'-AMP-activated protein kinase subunit beta-2 (Prkab2) from Mus musculus (Mouse).